A 477-amino-acid polypeptide reads, in one-letter code: Cysteine--tRNA ligase (477 aa).

Zn(2+) is bound at residue cysteine 29. The short motif at proline 31–asparagine 41 is the 'HIGH' region element. The Zn(2+) site is built by cysteine 209, histidine 234, and glutamate 238. The 'KMSKS' region signature appears at lysine 267 to serine 271. Lysine 270 serves as a coordination point for ATP.

This sequence belongs to the class-I aminoacyl-tRNA synthetase family. In terms of assembly, monomer. Requires Zn(2+) as cofactor.

The protein resides in the cytoplasm. It carries out the reaction tRNA(Cys) + L-cysteine + ATP = L-cysteinyl-tRNA(Cys) + AMP + diphosphate. The polypeptide is Cysteine--tRNA ligase (Desulfitobacterium hafniense (strain DSM 10664 / DCB-2)).